A 147-amino-acid chain; its full sequence is Myoglobin (147 aa).

One can recognise a Globin domain in the interval 2 to 141; that stretch reads ADHDLVLKCW…VIGDIDGYYK (140 aa). Position 60 (histidine 60) interacts with nitrite. Histidine 60 is a binding site for O2. Heme b is bound at residue histidine 89.

This sequence belongs to the globin family. In terms of assembly, monomeric.

The protein localises to the cytoplasm. It localises to the sarcoplasm. The enzyme catalyses Fe(III)-heme b-[protein] + nitric oxide + H2O = Fe(II)-heme b-[protein] + nitrite + 2 H(+). It catalyses the reaction H2O2 + AH2 = A + 2 H2O. Functionally, monomeric heme protein which primary function is to store oxygen and facilitate its diffusion within muscle tissues. Reversibly binds oxygen through a pentacoordinated heme iron and enables its timely and efficient release as needed during periods of heightened demand. Depending on the oxidative conditions of tissues and cells, and in addition to its ability to bind oxygen, it also has a nitrite reductase activity whereby it regulates the production of bioactive nitric oxide. Under stress conditions, like hypoxia and anoxia, it also protects cells against reactive oxygen species thanks to its pseudoperoxidase activity. The chain is Myoglobin (mb) from Danio rerio (Zebrafish).